Consider the following 220-residue polypeptide: Putative glutathione S-transferase C460.02c (220 aa).

One can recognise a GST N-terminal domain in the interval 1 to 81 (MFLGTIYSFK…YFYEKGKHND (81 aa)). Positions 89-216 (NEIEEAEMLK…YPLELPLTVT (128 aa)) constitute a GST C-terminal domain.

It belongs to the GST superfamily.

It is found in the cytoplasm. It catalyses the reaction RX + glutathione = an S-substituted glutathione + a halide anion + H(+). In terms of biological role, involved in the oxidative stress response and detoxification. The sequence is that of Putative glutathione S-transferase C460.02c from Schizosaccharomyces pombe (strain 972 / ATCC 24843) (Fission yeast).